The primary structure comprises 306 residues: Acetyl-coenzyme A carboxylase carboxyl transferase subunit beta (306 aa).

The CoA carboxyltransferase N-terminal domain maps to 25 to 294; it reads LWIKDPTSGE…APEPSHAFSK (270 aa). The tract at residues 287–306 is disordered; sequence EPSHAFSKDSQTQISKTKAA. Polar residues predominate over residues 294–306; sequence KDSQTQISKTKAA.

Belongs to the AccD/PCCB family. In terms of assembly, acetyl-CoA carboxylase is a heterohexamer composed of biotin carboxyl carrier protein (AccB), biotin carboxylase (AccC) and two subunits each of ACCase subunit alpha (AccA) and ACCase subunit beta (AccD).

Its subcellular location is the cytoplasm. The catalysed reaction is N(6)-carboxybiotinyl-L-lysyl-[protein] + acetyl-CoA = N(6)-biotinyl-L-lysyl-[protein] + malonyl-CoA. The protein operates within lipid metabolism; malonyl-CoA biosynthesis; malonyl-CoA from acetyl-CoA: step 1/1. Component of the acetyl coenzyme A carboxylase (ACC) complex. Biotin carboxylase (BC) catalyzes the carboxylation of biotin on its carrier protein (BCCP) and then the CO(2) group is transferred by the transcarboxylase to acetyl-CoA to form malonyl-CoA. In Bartonella bacilliformis (strain ATCC 35685 / KC583 / Herrer 020/F12,63), this protein is Acetyl-coenzyme A carboxylase carboxyl transferase subunit beta.